We begin with the raw amino-acid sequence, 1456 residues long: Macrophage mannose receptor 1 (1456 aa).

The signal sequence occupies residues 1-19 (MRLLLLLAFISVIPVSVQL). Residues 20 to 1388 (LDARQFLIYN…DPQPKGSSKA (1369 aa)) are Extracellular-facing. In terms of domain architecture, Ricin B-type lectin spans 22–142 (ARQFLIYNED…SGLWSRWKVY (121 aa)). Intrachain disulfides connect C35–C49, C74–C91, C102–C149, C168–C194, C182–C209, C247–C340, and C316–C332. Residue N104 is glycosylated (N-linked (GlcNAc...) asparagine). Positions 163–211 (ANGAVCAFPFKFENKWYADCTSAGRSDGWLWCGTTTDYDKDKLFGFCPL) constitute a Fibronectin type-II domain. Positions 225-341 (LTGILYQINS…CVQKLGYICK (117 aa)) constitute a C-type lectin 1 domain. The N-linked (GlcNAc...) asparagine glycan is linked to N344. 4 C-type lectin domains span residues 369–487 (YAGH…YICK), 511–626 (HGFY…FVCK), 655–778 (KTSM…WICQ), and 807–923 (YKDY…FICQ). Cystine bridges form between C391–C486 and C463–C478. N529 is a glycosylation site (N-linked (GlcNAc...) asparagine). Intrachain disulfides connect C532-C625, C600-C617, C680-C777, C753-C769, C828-C922, and C899-C914. N-linked (GlcNAc...) asparagine glycosylation is found at N926 and N930. C-type lectin domains lie at 951–1079 (YKNK…YICQ), 1101–1212 (YGKS…FLCK), and 1240–1355 (FYGH…FICK). 6 cysteine pairs are disulfide-bonded: C976-C1078, C1051-C1070, C1122-C1211, C1189-C1203, C1262-C1354, and C1331-C1346. A glycan (N-linked (GlcNAc...) asparagine) is linked at N1159. The N-linked (GlcNAc...) asparagine glycan is linked to N1204. A helical transmembrane segment spans residues 1389 to 1409 (AGVVTVVLLIVIGAGVAAYFF). Topologically, residues 1410-1456 (YKKRHALHIPQEATFENTLYFNSNLSPGTSDTKDLMGNIEQNEHAII) are cytoplasmic.

Detected in macrophages.

It is found in the endosome membrane. It localises to the cell membrane. Functionally, mediates the endocytosis of glycoproteins by macrophages. Binds both sulfated and non-sulfated polysaccharide chains. Acts as phagocytic receptor for bacteria, fungi and other pathogens. The sequence is that of Macrophage mannose receptor 1 (Mrc1) from Mus musculus (Mouse).